We begin with the raw amino-acid sequence, 91 residues long: Peptide Ctry2146 (91 aa).

The first 23 residues, 1 to 23, serve as a signal peptide directing secretion; the sequence is MKTQTLLVTFLVVLLMVATQTEA. Position 33 is a leucine amide (Leu-33). A propeptide spanning residues 37 to 91 is cleaved from the precursor; sequence GLLDGLLGKRGLLFGKRGPLFGKRALTNQDFLDFAYDPSLSAADMDALEMLFEDY.

Belongs to the non-disulfide-bridged peptide (NDBP) superfamily. Short antimicrobial peptide (group 4) family. In terms of tissue distribution, expressed by the venom gland.

It is found in the secreted. The protein localises to the target cell membrane. Its function is as follows. Antimicrobial peptide. The sequence is that of Peptide Ctry2146 from Chaerilus tryznai (Scorpion).